A 138-amino-acid polypeptide reads, in one-letter code: Probable DNA-directed RNA polymerases I, II, and III subunit RPABC2 (138 aa).

Acidic residues-rich tracts occupy residues 1-27 and 35-46; these read MADD…VIEE and EEEDDDNNVDEN. Residues 1-46 are disordered; sequence MADDDDYQDMDNDDFVDDNEMEDVIEEEQQRPDHEEEDDDNNVDEN.

Belongs to the archaeal Rpo6/eukaryotic RPB6 RNA polymerase subunit family. Component of the RNA polymerase I (Pol I), RNA polymerase II (Pol II) and RNA polymerase III (Pol III) complexes consisting of at least 13, 12 and 17 subunits, respectively.

Its subcellular location is the nucleus. Functionally, DNA-dependent RNA polymerases catalyze the transcription of DNA into RNA using the four ribonucleoside triphosphates as substrates. Common component of RNA polymerases I, II and III which synthesize ribosomal RNA precursors, mRNA precursors and many functional non-coding RNAs, and small RNAs, such as 5S rRNA and tRNAs, respectively. Pol II is the central component of the basal RNA polymerase II transcription machinery. Pols are composed of mobile elements that move relative to each other. In Pol II, RPB6 is part of the clamp element and together with parts of RPB1 and RPB2 forms a pocket to which the RPB4-RPB7 subcomplex binds. This chain is Probable DNA-directed RNA polymerases I, II, and III subunit RPABC2, found in Caenorhabditis briggsae.